Consider the following 541-residue polypeptide: Cytochrome P450 monooxygenase claU (541 aa).

Residues 12–32 form a helical membrane-spanning segment; sequence VIDTLVILFSTWAFLGLIRVI. Cysteine 480 provides a ligand contact to heme.

This sequence belongs to the cytochrome P450 family. Heme is required as a cofactor.

It localises to the membrane. It participates in secondary metabolite biosynthesis; terpenoid biosynthesis. Functionally, cytochrome P450 monooxygenase; part of the gene cluster that mediates the biosynthesis of clavilactone A, a meroterpenoid that features a unique benzo-fused ten-membered carbocyclic ring unit with an alpha,beta-epoxy-gamma-lactone moiety, forming an intriguing 10/5/3 tricyclic nested skeleton. Cytochrome P450 monooxygenases claO, claP, claQ, claU, and claW are close orthologs, suggesting that a redundant function or pseudogenes are present in the cla cluster. These monoxygenases are not involved in clavilactone A biosynthesis nor its modification. ClaR, ClaS and ClaT are sufficient to produce clavilactone A. The biosynthesis begins with the prenyltransferase claS that transfers geranyl pyrophosphate (GPP) to hydroquinone to produces geranylhydroquinone. The cytochrome P450 monooxygenase claR then catalyzes the diradical coupling reaction between the intramolecular hydroquinone and allyl moieties to form the benzo-fused ten-membered carbocyclic ring unit of wigantol. Finally the cytochrome P450 monooxygenase claT exquisitely and stereoselectively assembles the alpha,beta-epoxy-gamma-lactone moiety, producing clavilactone A via arnebinol A. The polypeptide is Cytochrome P450 monooxygenase claU (Ampulloclitocybe clavipes (Club foot)).